A 550-amino-acid chain; its full sequence is Cochlin (550 aa).

A signal peptide spans 1-15 (MPAAWMPVLRLGAYA). In terms of domain architecture, LCCL spans 28 to 121 (VPIAITCFTR…QTLARWSASF (94 aa)). 2 cysteine pairs are disulfide-bonded: cysteine 34–cysteine 50 and cysteine 54–cysteine 74. N-linked (GlcNAc...) asparagine glycosylation is present at asparagine 100. Over residues 126-139 (GKSSTQEATGQAVS) the composition is skewed to polar residues. The disordered stretch occupies residues 126–158 (GKSSTQEATGQAVSTARPPTGKRLKKTPEKKTG). 2 consecutive VWFA domains span residues 165-350 (DIAF…VQKL) and 367-537 (NIAF…VSDI).

In terms of assembly, monomer. May form homodimer. Interacts with type II collagen. Interacts with ANXA2. Interacts with SLC44A2. N-glycosylated.

Its subcellular location is the secreted. It localises to the extracellular space. The protein localises to the extracellular matrix. Functionally, plays a role in the control of cell shape and motility in the trabecular meshwork. This is Cochlin (COCH) from Cavia porcellus (Guinea pig).